Here is a 144-residue protein sequence, read N- to C-terminus: Arsenate reductase ArsI1 (144 aa).

Cys-14 serves as the catalytic Nucleophile; cysteine thioarsenate intermediate.

Belongs to the ArsC family.

The enzyme catalyses [glutaredoxin]-dithiol + arsenate + glutathione + H(+) = glutathionyl-S-S-[glutaredoxin] + arsenite + H2O. Catalyzes the reduction of arsenate [As(V)] to arsenite [As(III)]. Does not constitute the major arsenate reductase in cells: essential only in the absence of ArsC (AC P74313). In Synechocystis sp. (strain ATCC 27184 / PCC 6803 / Kazusa), this protein is Arsenate reductase ArsI1.